The primary structure comprises 337 residues: Aspartate carbamoyltransferase catalytic subunit (337 aa).

The carbamoyl phosphate site is built by Arg-54 and Thr-55. Lys-82 serves as a coordination point for L-aspartate. Carbamoyl phosphate is bound by residues Arg-104, His-134, and Gln-137. Residues Arg-177 and Arg-232 each coordinate L-aspartate. Carbamoyl phosphate contacts are provided by Gly-277 and Pro-278.

Belongs to the aspartate/ornithine carbamoyltransferase superfamily. ATCase family. Heterododecamer (2C3:3R2) of six catalytic PyrB chains organized as two trimers (C3), and six regulatory PyrI chains organized as three dimers (R2).

It carries out the reaction carbamoyl phosphate + L-aspartate = N-carbamoyl-L-aspartate + phosphate + H(+). Its pathway is pyrimidine metabolism; UMP biosynthesis via de novo pathway; (S)-dihydroorotate from bicarbonate: step 2/3. Catalyzes the condensation of carbamoyl phosphate and aspartate to form carbamoyl aspartate and inorganic phosphate, the committed step in the de novo pyrimidine nucleotide biosynthesis pathway. The polypeptide is Aspartate carbamoyltransferase catalytic subunit (Arthrobacter sp. (strain FB24)).